A 205-amino-acid chain; its full sequence is Putative 3-methyladenine DNA glycosylase (205 aa).

The protein belongs to the DNA glycosylase MPG family.

The protein is Putative 3-methyladenine DNA glycosylase of Staphylococcus epidermidis (strain ATCC 35984 / DSM 28319 / BCRC 17069 / CCUG 31568 / BM 3577 / RP62A).